A 372-amino-acid polypeptide reads, in one-letter code: Queuine tRNA-ribosyltransferase (372 aa).

Asp-90 acts as the Proton acceptor in catalysis. Residues Asp-90–Phe-94, Asp-144, Gln-193, and Gly-220 each bind substrate. Positions Gly-251–Asp-257 are RNA binding. Asp-270 (nucleophile) is an active-site residue. The tract at residues Thr-275–Arg-279 is RNA binding; important for wobble base 34 recognition. Zn(2+) contacts are provided by Cys-308, Cys-310, Cys-313, and His-339.

This sequence belongs to the queuine tRNA-ribosyltransferase family. As to quaternary structure, homodimer. Within each dimer, one monomer is responsible for RNA recognition and catalysis, while the other monomer binds to the replacement base PreQ1. Zn(2+) serves as cofactor.

It carries out the reaction 7-aminomethyl-7-carbaguanine + guanosine(34) in tRNA = 7-aminomethyl-7-carbaguanosine(34) in tRNA + guanine. It functions in the pathway tRNA modification; tRNA-queuosine biosynthesis. In terms of biological role, catalyzes the base-exchange of a guanine (G) residue with the queuine precursor 7-aminomethyl-7-deazaguanine (PreQ1) at position 34 (anticodon wobble position) in tRNAs with GU(N) anticodons (tRNA-Asp, -Asn, -His and -Tyr). Catalysis occurs through a double-displacement mechanism. The nucleophile active site attacks the C1' of nucleotide 34 to detach the guanine base from the RNA, forming a covalent enzyme-RNA intermediate. The proton acceptor active site deprotonates the incoming PreQ1, allowing a nucleophilic attack on the C1' of the ribose to form the product. After dissociation, two additional enzymatic reactions on the tRNA convert PreQ1 to queuine (Q), resulting in the hypermodified nucleoside queuosine (7-(((4,5-cis-dihydroxy-2-cyclopenten-1-yl)amino)methyl)-7-deazaguanosine). The chain is Queuine tRNA-ribosyltransferase from Campylobacter hominis (strain ATCC BAA-381 / DSM 21671 / CCUG 45161 / LMG 19568 / NCTC 13146 / CH001A).